A 31-amino-acid chain; its full sequence is Basic phospholipase A2 13 (31 aa).

Belongs to the phospholipase A2 family. Group I subfamily. The cofactor is Ca(2+). Expressed by the venom gland.

It localises to the secreted. The enzyme catalyses a 1,2-diacyl-sn-glycero-3-phosphocholine + H2O = a 1-acyl-sn-glycero-3-phosphocholine + a fatty acid + H(+). Functionally, snake venom phospholipase A2 (PLA2) that inhibits neuromuscular transmission by blocking acetylcholine release from the nerve termini. PLA2 catalyzes the calcium-dependent hydrolysis of the 2-acyl groups in 3-sn-phosphoglycerides. The sequence is that of Basic phospholipase A2 13 from Bungarus fasciatus (Banded krait).